A 196-amino-acid chain; its full sequence is Putative adenylate kinase (196 aa).

ATP contacts are provided by Gly10, Gly12, Lys13, Thr14, and Ser15. Residues 30–53 (YLNDLIKEEHLYSEVDEERDSVIA) are NMP. The segment at 118-128 (KRGYSEEKINE) is LID. Arg119 contacts ATP.

Belongs to the adenylate kinase family. AK6 subfamily. Interacts with uS11. Not a structural component of 40S pre-ribosomes, but transiently interacts with them by binding to uS11.

The enzyme catalyses AMP + ATP = 2 ADP. The catalysed reaction is ATP + H2O = ADP + phosphate + H(+). Its function is as follows. Broad-specificity nucleoside monophosphate (NMP) kinase that catalyzes the reversible transfer of the terminal phosphate group between nucleoside triphosphates and monophosphates. Also has ATPase activity. Involved in the late maturation steps of the 30S ribosomal particles, specifically 16S rRNA maturation. While NMP activity is not required for ribosome maturation, ATPase activity is. Associates transiently with small ribosomal subunit protein uS11. ATP hydrolysis breaks the interaction with uS11. May temporarily remove uS11 from the ribosome to enable a conformational change of the ribosomal RNA that is needed for the final maturation step of the small ribosomal subunit. In Methanosarcina mazei (strain ATCC BAA-159 / DSM 3647 / Goe1 / Go1 / JCM 11833 / OCM 88) (Methanosarcina frisia), this protein is Putative adenylate kinase.